We begin with the raw amino-acid sequence, 340 residues long: Heat-inducible transcription repressor HrcA (340 aa).

The protein belongs to the HrcA family.

Functionally, negative regulator of class I heat shock genes (grpE-dnaK-dnaJ and groELS operons). Prevents heat-shock induction of these operons. In Mycoplasma capricolum subsp. capricolum (strain California kid / ATCC 27343 / NCTC 10154), this protein is Heat-inducible transcription repressor HrcA.